A 616-amino-acid chain; its full sequence is Dihydroxy-acid dehydratase (616 aa).

Asp81 lines the Mg(2+) pocket. Cys122 contributes to the [2Fe-2S] cluster binding site. Residues Asp123 and Lys124 each coordinate Mg(2+). Residue Lys124 is modified to N6-carboxylysine. Cys195 is a binding site for [2Fe-2S] cluster. Glu491 is a binding site for Mg(2+). Ser517 acts as the Proton acceptor in catalysis.

The protein belongs to the IlvD/Edd family. As to quaternary structure, homodimer. The cofactor is [2Fe-2S] cluster. Mg(2+) serves as cofactor.

The catalysed reaction is (2R)-2,3-dihydroxy-3-methylbutanoate = 3-methyl-2-oxobutanoate + H2O. It catalyses the reaction (2R,3R)-2,3-dihydroxy-3-methylpentanoate = (S)-3-methyl-2-oxopentanoate + H2O. The protein operates within amino-acid biosynthesis; L-isoleucine biosynthesis; L-isoleucine from 2-oxobutanoate: step 3/4. It participates in amino-acid biosynthesis; L-valine biosynthesis; L-valine from pyruvate: step 3/4. Its function is as follows. Functions in the biosynthesis of branched-chain amino acids. Catalyzes the dehydration of (2R,3R)-2,3-dihydroxy-3-methylpentanoate (2,3-dihydroxy-3-methylvalerate) into 2-oxo-3-methylpentanoate (2-oxo-3-methylvalerate) and of (2R)-2,3-dihydroxy-3-methylbutanoate (2,3-dihydroxyisovalerate) into 2-oxo-3-methylbutanoate (2-oxoisovalerate), the penultimate precursor to L-isoleucine and L-valine, respectively. This chain is Dihydroxy-acid dehydratase, found in Yersinia pseudotuberculosis serotype O:1b (strain IP 31758).